The primary structure comprises 24 residues: Waglerin-3 (24 aa).

Basic and acidic residues predominate over residues 1–10; the sequence is SLGGKPDLRP. A disordered region spans residues 1–24; the sequence is SLGGKPDLRPCHPPCHYIPRPKPR. Cys-11 and Cys-15 are oxidised to a cystine.

This sequence belongs to the waglerin family. In terms of assembly, waglerin-1 is monomeric. In terms of processing, amidation of the waglerin-1 C-terminus increases the affinity by 2-fold. Expressed by the venom gland.

The protein resides in the secreted. Functionally, waglerin-1 selectively blocks the epsilon subunit of muscle nicotinic acetylcholine receptor (nAChR). Also has effects on rodent ionotropic GABA(A) receptors (GABR), since it potentiates I(GABA) in some neurons and depresses I(GABA) in others. In mice, it elicits tachypnea, ocular proptosis, rapid collapse and spasms, whereas no toxic effects on respiration and blood pressure are observed in rats. Its function is as follows. Waglerin-3 selectively blocks the epsilon subunit of muscle nicotinic acetylcholine receptor (nAChR). It elicits tachypnea, ocular proptosis, rapid collapse and spasms in mice. It causes death by respiratory failure. In Tropidolaemus wagleri (Wagler's pit viper), this protein is Waglerin-3.